A 130-amino-acid chain; its full sequence is Small ribosomal subunit protein uS8 (130 aa).

Belongs to the universal ribosomal protein uS8 family. As to quaternary structure, part of the 30S ribosomal subunit. Contacts proteins S5 and S12.

One of the primary rRNA binding proteins, it binds directly to 16S rRNA central domain where it helps coordinate assembly of the platform of the 30S subunit. This is Small ribosomal subunit protein uS8 from Edwardsiella ictaluri (strain 93-146).